Consider the following 33-residue polypeptide: Fatty acid-binding protein, intestinal (33 aa).

Belongs to the calycin superfamily. Fatty-acid binding protein (FABP) family. As to expression, intestine.

Its subcellular location is the cytoplasm. FABPs are thought to play a role in the intracellular transport of long-chain fatty acids and their acyl-CoA esters. The polypeptide is Fatty acid-binding protein, intestinal (fabp2) (Rhamdia sapo (South American catfish)).